Here is a 488-residue protein sequence, read N- to C-terminus: Aspartyl/glutamyl-tRNA(Asn/Gln) amidotransferase subunit B (488 aa).

This sequence belongs to the GatB/GatE family. GatB subfamily. In terms of assembly, heterotrimer of A, B and C subunits.

It carries out the reaction L-glutamyl-tRNA(Gln) + L-glutamine + ATP + H2O = L-glutaminyl-tRNA(Gln) + L-glutamate + ADP + phosphate + H(+). The enzyme catalyses L-aspartyl-tRNA(Asn) + L-glutamine + ATP + H2O = L-asparaginyl-tRNA(Asn) + L-glutamate + ADP + phosphate + 2 H(+). In terms of biological role, allows the formation of correctly charged Asn-tRNA(Asn) or Gln-tRNA(Gln) through the transamidation of misacylated Asp-tRNA(Asn) or Glu-tRNA(Gln) in organisms which lack either or both of asparaginyl-tRNA or glutaminyl-tRNA synthetases. The reaction takes place in the presence of glutamine and ATP through an activated phospho-Asp-tRNA(Asn) or phospho-Glu-tRNA(Gln). This chain is Aspartyl/glutamyl-tRNA(Asn/Gln) amidotransferase subunit B, found in Neorickettsia sennetsu (strain ATCC VR-367 / Miyayama) (Ehrlichia sennetsu).